We begin with the raw amino-acid sequence, 436 residues long: mRNA cap guanine-N(7) methyltransferase (436 aa).

The segment at 1-50 (MSTKPEKPIWMSQEDYDRQYGSITGDESSTVSKKDSKVTANAPGDGNGSL) is disordered. The mRNA cap 0 methyltransferase domain occupies 141 to 424 (SPIIKLRNFN…FYTMFAFRKV (284 aa)). 150 to 151 (NN) provides a ligand contact to mRNA. The S-adenosyl-L-methionine site is built by Lys154, Gly172, Asp194, Asp223, Gln249, and Tyr254.

This sequence belongs to the class I-like SAM-binding methyltransferase superfamily. mRNA cap 0 methyltransferase family.

The protein resides in the nucleus. It carries out the reaction a 5'-end (5'-triphosphoguanosine)-ribonucleoside in mRNA + S-adenosyl-L-methionine = a 5'-end (N(7)-methyl 5'-triphosphoguanosine)-ribonucleoside in mRNA + S-adenosyl-L-homocysteine. Its function is as follows. Responsible for methylating the 5'-cap structure of mRNAs. This chain is mRNA cap guanine-N(7) methyltransferase (ABD1), found in Saccharomyces cerevisiae (strain ATCC 204508 / S288c) (Baker's yeast).